Consider the following 502-residue polypeptide: Reduced meiotic recombination protein C1442.04c (502 aa).

Phosphoserine occurs at positions 328, 330, and 331. 3 disordered regions span residues 353–391 (NDLNNEEPNSVVAEDGSEIITLDENDQSPNEATEKLRDN), 420–440 (GSLNNADLSQEPITNDGENVD), and 454–502 (ESAF…PSDD). Residues 367–378 (DGSEIITLDEND) show a composition bias toward acidic residues. 2 stretches are compositionally biased toward polar residues: residues 420–436 (GSLNNADLSQEPITNDG) and 462–477 (GTINSSKRRLSVTTDT).

This sequence belongs to the RMR1 family.

Its subcellular location is the cytoplasm. It localises to the nucleus. Required for normal levels of gene conversion events during meiosis. This Schizosaccharomyces pombe (strain 972 / ATCC 24843) (Fission yeast) protein is Reduced meiotic recombination protein C1442.04c.